A 401-amino-acid chain; its full sequence is Mannonate dehydratase (401 aa).

The protein belongs to the mannonate dehydratase family. Fe(2+) is required as a cofactor. It depends on Mn(2+) as a cofactor.

The enzyme catalyses D-mannonate = 2-dehydro-3-deoxy-D-gluconate + H2O. Its pathway is carbohydrate metabolism; pentose and glucuronate interconversion. Catalyzes the dehydration of D-mannonate. The protein is Mannonate dehydratase of Brucella melitensis biotype 2 (strain ATCC 23457).